Consider the following 210-residue polypeptide: Na(+)-translocating NADH-quinone reductase subunit D (210 aa).

A run of 6 helical transmembrane segments spans residues 10 to 30 (VLFGPILDNNPIALQILGVCS), 42 to 62 (LVMSLALTAVTAFSNLFISMI), 72 to 92 (IIVQMTIIASLVIVVDQILKA), 103 to 123 (VFVGLIITNCIVMGRAEAFAM), 143 to 163 (FVLIVIGTIKELFGFGTILGF), and 178 to 198 (NGLLILPFSSFFLIGGLIWFI).

The protein belongs to the NqrDE/RnfAE family. In terms of assembly, composed of six subunits; NqrA, NqrB, NqrC, NqrD, NqrE and NqrF.

Its subcellular location is the cell inner membrane. It carries out the reaction a ubiquinone + n Na(+)(in) + NADH + H(+) = a ubiquinol + n Na(+)(out) + NAD(+). Functionally, NQR complex catalyzes the reduction of ubiquinone-1 to ubiquinol by two successive reactions, coupled with the transport of Na(+) ions from the cytoplasm to the periplasm. NqrA to NqrE are probably involved in the second step, the conversion of ubisemiquinone to ubiquinol. This chain is Na(+)-translocating NADH-quinone reductase subunit D, found in Pseudoalteromonas atlantica (strain T6c / ATCC BAA-1087).